The primary structure comprises 23 residues: Paralytic peptide 1 (23 aa).

Residues Cys7 and Cys19 are joined by a disulfide bond.

It belongs to the GBP/PSP1/paralytic peptide family. As to expression, hemolymph.

Functionally, causes rapid, rigid paralysis when injected into Lepidopteran larvae. The physiological role may be to reduce hemolymph loss following injury and promote wound healing. The chain is Paralytic peptide 1 from Spodoptera exigua (Beet armyworm).